The sequence spans 227 residues: Ribosomal RNA large subunit methyltransferase E (227 aa).

S-adenosyl-L-methionine contacts are provided by Gly78, Trp80, Asp103, Asp119, and Asp143. The active-site Proton acceptor is the Lys183.

Belongs to the class I-like SAM-binding methyltransferase superfamily. RNA methyltransferase RlmE family.

It localises to the cytoplasm. The enzyme catalyses uridine(2552) in 23S rRNA + S-adenosyl-L-methionine = 2'-O-methyluridine(2552) in 23S rRNA + S-adenosyl-L-homocysteine + H(+). In terms of biological role, specifically methylates the uridine in position 2552 of 23S rRNA at the 2'-O position of the ribose in the fully assembled 50S ribosomal subunit. The sequence is that of Ribosomal RNA large subunit methyltransferase E from Rickettsia bellii (strain RML369-C).